The primary structure comprises 4226 residues: Guanylate cyclase alpha (4226 aa).

The Cytoplasmic portion of the chain corresponds to 1–104; sequence MSDSKKHYNE…SFIFKGLYEQ (104 aa). A helical transmembrane segment spans residues 105–125; it reads FLRLPNIWFLLISLLEFIPQY. Over 126 to 131 the chain is Extracellular; sequence QNLSNY. A glycan (N-linked (GlcNAc...) asparagine) is linked at N127. A helical membrane pass occupies residues 132 to 152; the sequence is MYYSKHSSFFLLLFFICVSII. Residues 153 to 337 lie on the Cytoplasmic side of the membrane; the sequence is KNIYEDSRRS…LGYVNKELNS (185 aa). Residues 338–358 traverse the membrane as a helical segment; sequence YTIIGLIFTFICVFISVLFKW. Over 359 to 392 the chain is Extracellular; it reads TEDDKFRNGSHFFLITVKDNICESIVKYTLLYSN. N-linked (GlcNAc...) asparagine glycosylation is present at N366. Residues 393–413 traverse the membrane as a helical segment; that stretch reads IIPISILISVDLISILQSILI. Residues 414-2083 are Cytoplasmic-facing; it reads ENDNHISTFE…FIYGSKHLYT (1670 aa). Disordered regions lie at residues 552–572, 832–904, 968–989, and 1740–1765; these read EHSQ…NNIC, SSKN…SNND, INNN…KSSS, and NINK…NNSN. The span at 558–570 shows a compositional bias: low complexity; the sequence is DNNNNNDNNNNNN. The span at 838 to 847 shows a compositional bias: acidic residues; that stretch reads TLDDPTELIS. Positions 854–873 are enriched in basic and acidic residues; the sequence is LRDKYEHTSDKKNDTNKNRD. The span at 874-904 shows a compositional bias: low complexity; the sequence is GANNSNNNNNKDVSNNKNKNNNNYNYNSNND. Over residues 1745 to 1754 the composition is skewed to basic and acidic residues; it reads YKYDKNDKHN. The span at 1755–1765 shows a compositional bias: low complexity; the sequence is NNNNNNNNNSN. A helical membrane pass occupies residues 2084 to 2104; the sequence is ISIILYWNFFKNILLILPIFF. Topologically, residues 2105–2119 are extracellular; the sequence is YQAYASWSCVKIYPE. Residues 2120 to 2140 traverse the membrane as a helical segment; that stretch reads LLYTFFSIFWVFIPIIYYMFL. The Cytoplasmic portion of the chain corresponds to 2141–2169; the sequence is QHNLNYDILYNIPLFYALSRRRYNMNCFK. Residues 2170 to 2190 form a helical membrane-spanning segment; the sequence is FLPWIFEAIFYSMIIYFFAYA. The Extracellular portion of the chain corresponds to 2191 to 2202; that stretch reads ALKENSHLNNGE. The chain crosses the membrane as a helical span at residues 2203-2223; it reads VITINTFGNICFIGCLLISIL. The Cytoplasmic segment spans residues 2224 to 2235; the sequence is RLFLEGSLWSPS. A helical transmembrane segment spans residues 2236-2256; sequence ILITCFGCFLFVFFPSLLFIC. The Extracellular portion of the chain corresponds to 2257-2275; that stretch reads FAYLSNEYIREVFRQTFLW. The chain crosses the membrane as a helical span at residues 2276-2296; that stretch reads APLYVLLILWFSTCIISYIFI. Residues 2297–2787 lie on the Cytoplasmic side of the membrane; it reads NFTKSILFPN…QIHKKNKFYK (491 aa). A disordered region spans residues 2477–2505; it reads NNDNNNDDNDNDNNNNNNNNDNYNNNDHN. The segment covering 2488 to 2502 has biased composition (low complexity); the sequence is DNNNNNNNNDNYNNN. A helical membrane pass occupies residues 2788-2808; that stretch reads TFTPWYRFIFLLLGVFFLYVW. Residues 2809-2828 lie on the Extracellular side of the membrane; that stretch reads KLESSLSQLWNMPSDASTDV. The helical transmembrane segment at 2829-2849 threads the bilayer; that stretch reads FILFLSLLLELVLLAATVTTF. The Cytoplasmic portion of the chain corresponds to 2850–2860; the sequence is FSNIFIENFNK. A helical membrane pass occupies residues 2861–2881; it reads IISAVVILIITYHVVSYSVTH. At 2882 to 2900 the chain is on the extracellular side; sequence IDGVFQAVLFPLYTFVILR. Residues 2901-2921 form a helical membrane-spanning segment; that stretch reads LPFVNAVLCNIIFLGLFIIRF. The Cytoplasmic portion of the chain corresponds to 2922–2930; it reads NGDHFLDKK. A helical transmembrane segment spans residues 2931-2951; sequence GLAHYIPLFIGVDVFVGFVGY. Residues 2952-3008 lie on the Extracellular side of the membrane; the sequence is RLEYNQRKNFLLEYSVESSRRKQREILNTMLPPFVVDEMIYSELNEEGIPISLKAED. A helical membrane pass occupies residues 3009 to 3029; that stretch reads ISTVTIIFCDIYDFQNIVASI. In terms of domain architecture, Guanylate cyclase 1 spans 3013–3270; sequence TIIFCDIYDF…DTVNTASRMK (258 aa). Residues 3030-3738 are Cytoplasmic-facing; sequence EPTRLVEVLD…SNINSIEQAL (709 aa). Disordered regions lie at residues 3077–3150 and 3201–3230; these read EDEL…FEED and DAND…NNKP. Composition is skewed to low complexity over residues 3083 to 3098 and 3108 to 3138; these read NKYS…NYYY and NNNN…NNVN. The span at 3140-3150 shows a compositional bias: acidic residues; the sequence is SDDDGDFFEED. Residues 3201–3220 are compositionally biased toward basic and acidic residues; it reads DANDDTHNVNDSFNNDKAEN. A helical membrane pass occupies residues 3739–3759; the sequence is IIFLVTFVMQTLISSTVSIVF. Over 3760–3773 the chain is Extracellular; that stretch reads IDHKRATQTLHINY. The chain crosses the membrane as a helical span at residues 3774-3794; the sequence is FAYWSVRSVYTFFGFVLWLLF. Residues 3795-3811 are Cytoplasmic-facing; sequence HYRTRPEVSSLLNIKWM. The chain crosses the membrane as a helical span at residues 3812-3832; sequence IFFLNLLFISAACVFSIAYLW. Residues 3833–3840 are Extracellular-facing; that stretch reads AISETDQT. Residues 3841-3861 form a helical membrane-spanning segment; sequence TSYTIWMTNDTIEFFFYLVIL. Topologically, residues 3862 to 3871 are cytoplasmic; sequence HHNTGMLFQT. The chain crosses the membrane as a helical span at residues 3872 to 3892; it reads CILVDLLFITMSLTFIATSVV. A topological domain (extracellular) is located at residue K3893. Residues 3894–3914 traverse the membrane as a helical segment; the sequence is TITTDSTVLLIPWYVAFNLIS. Residues 3915 to 4226 lie on the Cytoplasmic side of the membrane; the sequence is TYCKESIDRR…INVNDRQSNL (312 aa). The Guanylate cyclase 2 domain occupies 3970 to 4104; sequence TFLFADICGF…IDVLTGNLME (135 aa). Mg(2+) contacts are provided by D3975, I3976, and D4019.

In the N-terminal section; belongs to the cation transport ATPase (P-type) (TC 3.A.3) family. Type IV subfamily. This sequence in the C-terminal section; belongs to the adenylyl cyclase class-4/guanylyl cyclase family. It depends on Mg(2+) as a cofactor. Mn(2+) serves as cofactor.

It localises to the cell membrane. Its subcellular location is the cytoplasmic vesicle membrane. It catalyses the reaction GTP = 3',5'-cyclic GMP + diphosphate. In terms of biological role, catalyzes the synthesis of the second messenger cGMP from GTP. In asexual blood stage schizonts, required for cGMP production which is essential for PKG activation, PKG-dependent Ca(2+) release, and ultimately merozoite egress from host erythrocytes. In Plasmodium falciparum (isolate 3D7), this protein is Guanylate cyclase alpha.